Reading from the N-terminus, the 187-residue chain is MAKEEYVSRMLVMLIMIMPLVAQGSRLHSWANRLEETGKDKVTNLQFYFHDTLSGKNPTAVKVAQGTDTEKSPTLFGAVFMVDDALTETADPKSKLVGRAQGLYGSSCKEEVGLIMAMSFCFEDGPYKDSTISMIGKNSAMNPIREMPIVGGTGMFRMARGYAIARTNWFDPKTGDAIVGYNVTIMH.

The N-terminal stretch at 1–24 (MAKEEYVSRMLVMLIMIMPLVAQG) is a signal peptide. N-linked (GlcNAc...) asparagine glycosylation is present at asparagine 182.

It belongs to the plant dirigent protein family. In terms of assembly, homodimer.

It localises to the secreted. The protein resides in the extracellular space. It is found in the apoplast. In terms of biological role, dirigent proteins impart stereoselectivity on the phenoxy radical-coupling reaction, yielding optically active lignans from two molecules of coniferyl alcohol in the biosynthesis of lignans, flavonolignans, and alkaloids and thus plays a central role in plant secondary metabolism. In Arabidopsis thaliana (Mouse-ear cress), this protein is Dirigent protein 23 (DIR23).